The chain runs to 317 residues: 17-beta-hydroxysteroid dehydrogenase type 6 (317 aa).

A signal peptide spans 1–17 (MWFYLVTLVGLYYLLRW). 33–57 (FITGCDSGFGNLLARQLDRRGMRVL) lines the NAD(+) pocket. N161 carries an N-linked (GlcNAc...) asparagine glycan. S164 provides a ligand contact to substrate. Residue Y176 is the Proton acceptor of the active site.

It belongs to the short-chain dehydrogenases/reductases (SDR) family. As to expression, detected in prostate, liver and kidney.

The protein localises to the microsome membrane. The protein resides in the endoplasmic reticulum membrane. The enzyme catalyses all-trans-retinol--[retinol-binding protein] + NAD(+) = all-trans-retinal--[retinol-binding protein] + NADH + H(+). It catalyses the reaction all-trans-retinol + NAD(+) = all-trans-retinal + NADH + H(+). It carries out the reaction androsterone + NAD(+) = 5alpha-androstan-3,17-dione + NADH + H(+). The catalysed reaction is testosterone + NAD(+) = androst-4-ene-3,17-dione + NADH + H(+). The enzyme catalyses 5alpha-androstane-3alpha,17beta-diol + NAD(+) = 17beta-hydroxy-5alpha-androstan-3-one + NADH + H(+). It catalyses the reaction 17beta-estradiol + NAD(+) = estrone + NADH + H(+). It carries out the reaction 17beta-estradiol + NADP(+) = estrone + NADPH + H(+). The catalysed reaction is 3alpha-hydroxy-5alpha-pregnan-20-one + NAD(+) = 5alpha-pregnane-3,20-dione + NADH + H(+). The enzyme catalyses 5alpha-androstane-3beta,17beta-diol + NAD(+) = 17beta-hydroxy-5alpha-androstan-3-one + NADH + H(+). It catalyses the reaction 3beta-hydroxy-5alpha-androstan-17-one + NAD(+) = 5alpha-androstan-3,17-dione + NADH + H(+). Its activity is regulated as follows. Competitively inhibited by 9-cis-retinoic acid and 13-cis-retinoic acid. Functionally, NAD-dependent oxidoreductase with broad substrate specificity that shows both oxidative and reductive activity (in vitro). Has retinol dehydrogenase activity towards all-trans-retinol (in vitro). Has 17-beta-hydroxysteroid dehydrogenase activity towards various steroids (in vitro). Converts 5-alpha-androstan-3-alpha,17-beta-diol to androsterone and estradiol to estrone (in vitro). Has 3-alpha-hydroxysteroid dehydrogenase activity towards androsterone (in vitro). In Rattus norvegicus (Rat), this protein is 17-beta-hydroxysteroid dehydrogenase type 6 (Hsd17b6).